A 469-amino-acid chain; its full sequence is Glutamate--tRNA ligase (469 aa).

Residues 9 to 19 (PSPTGYLHVGG) carry the 'HIGH' region motif. Zn(2+) contacts are provided by C98, C100, C125, and D127. A 'KMSKS' region motif is present at residues 237 to 241 (KLSKR). K240 is an ATP binding site.

It belongs to the class-I aminoacyl-tRNA synthetase family. Glutamate--tRNA ligase type 1 subfamily. Monomer. It depends on Zn(2+) as a cofactor.

The protein localises to the cytoplasm. The catalysed reaction is tRNA(Glu) + L-glutamate + ATP = L-glutamyl-tRNA(Glu) + AMP + diphosphate. Functionally, catalyzes the attachment of glutamate to tRNA(Glu) in a two-step reaction: glutamate is first activated by ATP to form Glu-AMP and then transferred to the acceptor end of tRNA(Glu). The polypeptide is Glutamate--tRNA ligase (Erwinia tasmaniensis (strain DSM 17950 / CFBP 7177 / CIP 109463 / NCPPB 4357 / Et1/99)).